The primary structure comprises 321 residues: Methionyl-tRNA formyltransferase (321 aa).

111–114 is a binding site for (6S)-5,6,7,8-tetrahydrofolate; the sequence is GLLP.

This sequence belongs to the Fmt family.

The enzyme catalyses L-methionyl-tRNA(fMet) + (6R)-10-formyltetrahydrofolate = N-formyl-L-methionyl-tRNA(fMet) + (6S)-5,6,7,8-tetrahydrofolate + H(+). Attaches a formyl group to the free amino group of methionyl-tRNA(fMet). The formyl group appears to play a dual role in the initiator identity of N-formylmethionyl-tRNA by promoting its recognition by IF2 and preventing the misappropriation of this tRNA by the elongation apparatus. In Chlamydia pneumoniae (Chlamydophila pneumoniae), this protein is Methionyl-tRNA formyltransferase.